The primary structure comprises 331 residues: tRNA-cytidine(32) 2-sulfurtransferase (331 aa).

Residues M1–R31 are disordered. The segment covering D8–A23 has biased composition (low complexity). The short motif at S71–S76 is the PP-loop motif element. [4Fe-4S] cluster contacts are provided by C146, C149, and C237.

Belongs to the TtcA family. Homodimer. Mg(2+) is required as a cofactor. The cofactor is [4Fe-4S] cluster.

The protein resides in the cytoplasm. The enzyme catalyses cytidine(32) in tRNA + S-sulfanyl-L-cysteinyl-[cysteine desulfurase] + AH2 + ATP = 2-thiocytidine(32) in tRNA + L-cysteinyl-[cysteine desulfurase] + A + AMP + diphosphate + H(+). It participates in tRNA modification. In terms of biological role, catalyzes the ATP-dependent 2-thiolation of cytidine in position 32 of tRNA, to form 2-thiocytidine (s(2)C32). The sulfur atoms are provided by the cysteine/cysteine desulfurase (IscS) system. The polypeptide is tRNA-cytidine(32) 2-sulfurtransferase (Burkholderia lata (strain ATCC 17760 / DSM 23089 / LMG 22485 / NCIMB 9086 / R18194 / 383)).